We begin with the raw amino-acid sequence, 553 residues long: MPHFNPVPVSNKKFVFDDFILNMDGSLLRSEKKVNIPPKEYAVLVILLEAAGKIVSKNTLLDQVWGDAEVNEESLTRCIYALRRILSEDKEHRYIETLYGQGYRFNRPVVVVSPPAPQPTTHTLAILPFQMQDQVQSESLHYSIVKGLSQYAPFGLSVLPVTITKNCRSVKDILELMDQLRPDYYISGQMIPDGNDNIVQIEIVRVKGYHLLHQESIKLIEHQPASLLQNKIANLLLRCIPGLRWDTKQISELNSIDSTMVYLRGKHELNQYTPYSLQQALKLLTQCVNMSPNSIAPYCALAECYLSMAQMGIFDKQNAMIKAKEHAIKATELDHNNPQALGLLGLINTIHSEYIVGSLLFKQANLLSPISADIKYYYGWNLFMAGQLEEALQTINECLKLDPTRAAAGITKLWITYYHTGIDDAIRLGDELRSQHLQDNPILLSMQVMFLSLKGKHELARKLTKEISTQEITGLIAVNLLYAEYCQNSERALPTIREFLESEQRIDNNPGLLPLVLVAHGEAIAEKMWNKFKNEDNIWFKRWKQDPRLIKLR.

A DNA-binding region (ompR/PhoB-type) is located at residues 11–107 (NKKFVFDDFI…LYGQGYRFNR (97 aa)). Position 62 is a 4-aspartylphosphate (Asp-62). One copy of the TPR repeat lies at 372 to 405 (ADIKYYYGWNLFMAGQLEEALQTINECLKLDPTR).

Functionally, the main transcriptional regulator of the Salmonella pathogenicity island 1 (SPI1) gene expression. Activates the expression of invasion genes by a direct action at their promoters and also indirectly by increasing the level of invF. Also binds upstream of prgH and directly activates the expression of prgHIJK operon. This is Transcriptional regulator HilA (hilA) from Salmonella typhi.